Reading from the N-terminus, the 97-residue chain is Co-chaperonin GroES (97 aa).

It belongs to the GroES chaperonin family. In terms of assembly, heptamer of 7 subunits arranged in a ring. Interacts with the chaperonin GroEL.

It is found in the cytoplasm. In terms of biological role, together with the chaperonin GroEL, plays an essential role in assisting protein folding. The GroEL-GroES system forms a nano-cage that allows encapsulation of the non-native substrate proteins and provides a physical environment optimized to promote and accelerate protein folding. GroES binds to the apical surface of the GroEL ring, thereby capping the opening of the GroEL channel. This is Co-chaperonin GroES from Buchnera aphidicola subsp. Cinara cedri (strain Cc).